A 205-amino-acid polypeptide reads, in one-letter code: Holliday junction branch migration complex subunit RuvA (205 aa).

The domain I stretch occupies residues 1-64; that stretch reads MIGRLRGTLA…EDAHLLYGFH (64 aa). The domain II stretch occupies residues 65–143; that stretch reads EKRERELFRE…AWETSPAMFT (79 aa). The tract at residues 144–153 is flexible linker; that stretch reads LVSDGPVPVS. A domain III region spans residues 154 to 205; sequence GASTAEADAVSALVSLGYKPQEASKAVSAIKDKAGLSSEELIRRSLKGMITK.

Belongs to the RuvA family. In terms of assembly, homotetramer. Forms an RuvA(8)-RuvB(12)-Holliday junction (HJ) complex. HJ DNA is sandwiched between 2 RuvA tetramers; dsDNA enters through RuvA and exits via RuvB. An RuvB hexamer assembles on each DNA strand where it exits the tetramer. Each RuvB hexamer is contacted by two RuvA subunits (via domain III) on 2 adjacent RuvB subunits; this complex drives branch migration. In the full resolvosome a probable DNA-RuvA(4)-RuvB(12)-RuvC(2) complex forms which resolves the HJ.

The protein resides in the cytoplasm. In terms of biological role, the RuvA-RuvB-RuvC complex processes Holliday junction (HJ) DNA during genetic recombination and DNA repair, while the RuvA-RuvB complex plays an important role in the rescue of blocked DNA replication forks via replication fork reversal (RFR). RuvA specifically binds to HJ cruciform DNA, conferring on it an open structure. The RuvB hexamer acts as an ATP-dependent pump, pulling dsDNA into and through the RuvAB complex. HJ branch migration allows RuvC to scan DNA until it finds its consensus sequence, where it cleaves and resolves the cruciform DNA. The polypeptide is Holliday junction branch migration complex subunit RuvA (Pseudomonas putida (strain W619)).